The primary structure comprises 498 residues: Thiamine transporter 1 (498 aa).

An N-acetylmethionine modification is found at Met1. The Cytoplasmic portion of the chain corresponds to 1–28; sequence MDVPARVSRRAAAAAARMLLRTARVPRE. Residues 29-46 traverse the membrane as a helical segment; the sequence is CWFLPTALLCAYGFFANL. Residues 47-71 are Extracellular-facing; sequence RPSEPFLTPYLLGPDKNLTERQVYN. N-linked (GlcNAc...) asparagine glycosylation is present at Asn63. The chain crosses the membrane as a helical span at residues 72–92; that stretch reads EIYPVWTYSYLLLLFPVFLAT. The Cytoplasmic portion of the chain corresponds to 93–105; sequence DYLRYKPVILLQG. A helical membrane pass occupies residues 106–126; that stretch reads LSLIVTWFMLLYAQGLLAIQF. The Extracellular segment spans residues 127–128; that stretch reads LE. The chain crosses the membrane as a helical span at residues 129 to 149; sequence FFYGIATATEIAYYSYIYTVV. At 150–164 the chain is on the cytoplasmic side; sequence DLGMYQKVTSYCRSA. Residues 165 to 185 form a helical membrane-spanning segment; it reads TLVGFTVGSVLGQILVSVVGW. Position 186 (Ser186) is a topological domain, extracellular. Residues 187 to 207 form a helical membrane-spanning segment; it reads LFSLNVISLTCVSVAFAVAWF. The Cytoplasmic segment spans residues 208–295; it reads LPMPQKSLFF…DFLMCYSSRP (88 aa). Ser222 is modified (phosphoserine). Residues 296 to 316 traverse the membrane as a helical segment; the sequence is LLCWSVWWALSTCGYFQVVNY. Residues 317–334 lie on the Extracellular side of the membrane; the sequence is AQGLWEKVMPSQNADIYN. Residues 335–355 traverse the membrane as a helical segment; it reads GGVEAVSTLLGASAVFAVGYI. The Cytoplasmic segment spans residues 356–360; sequence KLSWS. Residues 361 to 381 form a helical membrane-spanning segment; sequence TWGEMTLFLCSLLIAAAVYVM. Residues 382–386 are Extracellular-facing; the sequence is DTVQS. A helical transmembrane segment spans residues 387-407; sequence IWVCYASYVVFRIIYMVLITI. Residues 408–423 are Cytoplasmic-facing; it reads ATFQIAANLSMERYAL. The helical transmembrane segment at 424–444 threads the bilayer; it reads VFGVNTFIALALQTLLTLIVV. Residues 445-456 lie on the Extracellular side of the membrane; the sequence is DARGLGLCITTQ. Residues 457–477 traverse the membrane as a helical segment; the sequence is FLIYASYFAAISVVFLANGIV. The Cytoplasmic segment spans residues 478–498; sequence SIIKKCRKQEDPSSSPQASTS.

The protein belongs to the reduced folate carrier (RFC) transporter (TC 2.A.48) family. In terms of assembly, interacts with TSPAN1; this interaction increases the stability of SLC19A2. Interacts with TMEM63B. Expressed in liver. Expressed in cochlear hair cells and duodenum (at protein level). Detected in pancreatic acinar cells (at protein level). Also expressed strongly in pancreatic islet cells. Expressed in the testis. As to expression, very highly expressed in liver, and also detected at lower levels in heart, testis, kidney, brain and spleen. In terms of tissue distribution, expressed at low levels in liver and spleen.

It localises to the cell membrane. The catalysed reaction is thiamine(out) + H(+)(in) = thiamine(in) + H(+)(out). The enzyme catalyses pyridoxine(out) + n H(+)(out) = pyridoxine(in) + n H(+)(in). High-affinity transporter for the intake of thiamine. Essential for spermatogenesis. Mediates H(+)-dependent pyridoxine transport. This chain is Thiamine transporter 1, found in Mus musculus (Mouse).